The following is a 152-amino-acid chain: uncharacterized protein (152 aa).

The protein localises to the mitochondrion. This is an uncharacterized protein from Arabidopsis thaliana (Mouse-ear cress).